Consider the following 476-residue polypeptide: Chromosomal replication initiator protein DnaA (476 aa).

Residues 1–73 (MTNSEQERWS…LSAWQAEMPE (73 aa)) form a domain I, interacts with DnaA modulators region. Residues 73-132 (EVHRIDLSVRTAMRCATPAKEAPAAVEARRPERSDAKPVSDARAPVMTPVAASHDALGGS) are domain II. The interval 92 to 115 (KEAPAAVEARRPERSDAKPVSDAR) is disordered. The span at 99–112 (EARRPERSDAKPVS) shows a compositional bias: basic and acidic residues. Residues 133–355 (PLDPRLTFAS…GAINRLLAHS (223 aa)) are domain III, AAA+ region. Residues Gly180, Gly182, Lys183, and Thr184 each coordinate ATP. Residues 356–476 (KLNNQPVTLD…VESLKRQLQD (121 aa)) form a domain IV, binds dsDNA region.

Belongs to the DnaA family. In terms of assembly, oligomerizes as a right-handed, spiral filament on DNA at oriC.

It localises to the cytoplasm. Plays an essential role in the initiation and regulation of chromosomal replication. ATP-DnaA binds to the origin of replication (oriC) to initiate formation of the DNA replication initiation complex once per cell cycle. Binds the DnaA box (a 9 base pair repeat at the origin) and separates the double-stranded (ds)DNA. Forms a right-handed helical filament on oriC DNA; dsDNA binds to the exterior of the filament while single-stranded (ss)DNA is stabiized in the filament's interior. The ATP-DnaA-oriC complex binds and stabilizes one strand of the AT-rich DNA unwinding element (DUE), permitting loading of DNA polymerase. After initiation quickly degrades to an ADP-DnaA complex that is not apt for DNA replication. Binds acidic phospholipids. The protein is Chromosomal replication initiator protein DnaA of Bradyrhizobium sp. (strain ORS 278).